A 377-amino-acid chain; its full sequence is Signal peptide peptidase (377 aa).

Residues 1–27 are disordered; that stretch reads MDSALSDPHNGSAEAGGPTNSTTRPPS. Topologically, residues 1-31 are lumenal; the sequence is MDSALSDPHNGSAEAGGPTNSTTRPPSTPEG. 2 N-linked (GlcNAc...) asparagine glycosylation sites follow: asparagine 10 and asparagine 20. A helical transmembrane segment spans residues 32–52; that stretch reads IALAYGSLLLMALLPIFFGAL. Residues 53–77 lie on the Cytoplasmic side of the membrane; sequence RSVRCARGKNASDMPETITSRDAAR. The helical transmembrane segment at 78–98 threads the bilayer; that stretch reads FPIIASCTLLGLYLFFKIFSQ. Topologically, residues 99 to 100 are lumenal; it reads EY. The chain crosses the membrane as a helical span at residues 101 to 121; sequence INLLLSMYFFVLGILALSHTI. Over 122-157 the chain is Cytoplasmic; the sequence is SPFMNKFFPASFPNRQYQLLFTQGSGENKEEIINYE. Residues 158–178 traverse the membrane as a helical segment; it reads FDTKDLVCLGLSSIVGVWYLL. Over 179 to 181 the chain is Lumenal; the sequence is RKH. The helical transmembrane segment at 182-202 threads the bilayer; it reads WIANNLFGLAFSLNGVELLHL. Over 203–209 the chain is Cytoplasmic; sequence NNVSTGC. The helical transmembrane segment at 210–230 threads the bilayer; it reads ILLGGLFIYDVFWVFGTNVMV. Aspartate 219 is a catalytic residue. Over 231–256 the chain is Lumenal; sequence TVAKSFEAPIKLVFPQDLLEKGLEAN. A helical transmembrane segment spans residues 257-277; the sequence is NFAMLGLGDVVIPGIFIALLL. Residue aspartate 265 is part of the active site. Residues 278–290 lie on the Cytoplasmic side of the membrane; the sequence is RFDISLKKNTHTY. The chain crosses the membrane as a helical span at residues 291-311; it reads FYTSFAAYIFGLGLTIFIMHI. At 312 to 314 the chain is on the lumenal side; it reads FKH. A helical transmembrane segment spans residues 315 to 335; it reads AQPALLYLVPACIGFPVLVAL. Residues 317–319 carry the PAL motif; sequence PAL. The Cytoplasmic segment spans residues 336 to 377; it reads AKGEVTEMFSYEESNPKDPAAVTESKEGTEASASKGLEKKEK. The interval 345 to 377 is disordered; sequence SYEESNPKDPAAVTESKEGTEASASKGLEKKEK. Serine 367 is modified (phosphoserine).

The protein belongs to the peptidase A22B family. In terms of assembly, monomer. Homodimer. Interacts with RNF139. Interacts with DERL1 and XBP1 isoform 1. In terms of processing, N-glycosylated. As to expression, widely expressed with highest levels in kidney, liver, placenta, lung, leukocytes and small intestine and reduced expression in heart and skeletal muscle. Expressed abundantly in the CNS with highest levels in thalamus and medulla.

Its subcellular location is the endoplasmic reticulum membrane. It localises to the membrane. It is found in the cell membrane. Its function is as follows. Catalyzes intramembrane proteolysis of signal peptides that have been removed from precursors of secretory and membrane proteins, resulting in the release of the fragment from the ER membrane into the cytoplasm. Required to generate lymphocyte cell surface (HLA-E) epitopes derived from MHC class I signal peptides. May be necessary for the removal of the signal peptide that remains attached to the hepatitis C virus core protein after the initial proteolytic processing of the polyprotein. Involved in the intramembrane cleavage of the integral membrane protein PSEN1. Cleaves the integral membrane protein XBP1 isoform 1 in a DERL1/RNF139-dependent manner. May play a role in graft rejection. The sequence is that of Signal peptide peptidase from Homo sapiens (Human).